Consider the following 518-residue polypeptide: Protein MGF 505-6R (518 aa).

5 ANK repeats span residues 54–83, 129–158, 261–290, 292–322, and 324–351; these read SIND…NLHY, ECDF…LLNV, SVNR…IPRG, IERL…KVKN, and KKLV…NLVD.

It belongs to the asfivirus MGF 505 family.

Its function is as follows. Plays a role in virus cell tropism, and may be required for efficient virus replication in macrophages. The polypeptide is Protein MGF 505-6R (Ornithodoros (relapsing fever ticks)).